The sequence spans 393 residues: Proteasome-activating nucleotidase (393 aa).

The stretch at 14-53 (SDEVQLVRLLEEKIKSLQIEIENLRKELNYYKAEMEKMLS) forms a coiled coil. ATP-binding positions include 178–183 (GTGKTM) and tyrosine 317. Residues 391–393 (KYS) are docks into pockets in the proteasome alpha-ring to cause gate opening.

It belongs to the AAA ATPase family. In terms of assembly, homohexamer. The hexameric complex has a two-ring architecture resembling a top hat that caps the 20S proteasome core at one or both ends. Upon ATP-binding, the C-terminus of PAN interacts with the alpha-rings of the proteasome core by binding to the intersubunit pockets.

The protein resides in the cytoplasm. In terms of biological role, ATPase which is responsible for recognizing, binding, unfolding and translocation of substrate proteins into the archaeal 20S proteasome core particle. Is essential for opening the gate of the 20S proteasome via an interaction with its C-terminus, thereby allowing substrate entry and access to the site of proteolysis. Thus, the C-termini of the proteasomal ATPase function like a 'key in a lock' to induce gate opening and therefore regulate proteolysis. Unfolding activity requires energy from ATP hydrolysis, whereas ATP binding alone promotes ATPase-20S proteasome association which triggers gate opening, and supports translocation of unfolded substrates. This Saccharolobus islandicus (strain Y.N.15.51 / Yellowstone #2) (Sulfolobus islandicus) protein is Proteasome-activating nucleotidase.